A 513-amino-acid chain; its full sequence is Light-independent protochlorophyllide reductase subunit B (513 aa).

Residue Asp36 coordinates [4Fe-4S] cluster. Asp274 acts as the Proton donor in catalysis. 409 to 410 lines the substrate pocket; that stretch reads GL. The segment at 426 to 457 is disordered; it reads DAAGPSHHGGHSPKPQAAEPAPQAAPQPENTG. Over residues 440 to 454 the composition is skewed to low complexity; the sequence is PQAAEPAPQAAPQPE.

It belongs to the ChlB/BchB/BchZ family. Protochlorophyllide reductase is composed of three subunits; BchL, BchN and BchB. Forms a heterotetramer of two BchB and two BchN subunits. [4Fe-4S] cluster serves as cofactor.

It carries out the reaction chlorophyllide a + oxidized 2[4Fe-4S]-[ferredoxin] + 2 ADP + 2 phosphate = protochlorophyllide a + reduced 2[4Fe-4S]-[ferredoxin] + 2 ATP + 2 H2O. Its pathway is porphyrin-containing compound metabolism; bacteriochlorophyll biosynthesis (light-independent). Component of the dark-operative protochlorophyllide reductase (DPOR) that uses Mg-ATP and reduced ferredoxin to reduce ring D of protochlorophyllide (Pchlide) to form chlorophyllide a (Chlide). This reaction is light-independent. The NB-protein (BchN-BchB) is the catalytic component of the complex. This chain is Light-independent protochlorophyllide reductase subunit B, found in Roseobacter denitrificans (strain ATCC 33942 / OCh 114) (Erythrobacter sp. (strain OCh 114)).